We begin with the raw amino-acid sequence, 374 residues long: Chaperone protein DnaJ (374 aa).

The J domain occupies 5–70 (DYYEVLGVAR…DKRARYDRFG (66 aa)). The segment at 135-213 (GDEVTLRLPK…CKGSGILQQV (79 aa)) adopts a CR-type zinc-finger fold. Zn(2+)-binding residues include Cys148, Cys151, Cys165, Cys168, Cys187, Cys190, Cys201, and Cys204. CXXCXGXG motif repeat units follow at residues 148–155 (CDECNGSG), 165–172 (CRHCGGNG), 187–194 (CPVCRGEG), and 201–208 (CPKCKGSG).

Belongs to the DnaJ family. In terms of assembly, homodimer. Requires Zn(2+) as cofactor.

Its subcellular location is the cytoplasm. Its function is as follows. Participates actively in the response to hyperosmotic and heat shock by preventing the aggregation of stress-denatured proteins and by disaggregating proteins, also in an autonomous, DnaK-independent fashion. Unfolded proteins bind initially to DnaJ; upon interaction with the DnaJ-bound protein, DnaK hydrolyzes its bound ATP, resulting in the formation of a stable complex. GrpE releases ADP from DnaK; ATP binding to DnaK triggers the release of the substrate protein, thus completing the reaction cycle. Several rounds of ATP-dependent interactions between DnaJ, DnaK and GrpE are required for fully efficient folding. Also involved, together with DnaK and GrpE, in the DNA replication of plasmids through activation of initiation proteins. The polypeptide is Chaperone protein DnaJ (Nitratidesulfovibrio vulgaris (strain DSM 19637 / Miyazaki F) (Desulfovibrio vulgaris)).